The chain runs to 319 residues: ATP-dependent 6-phosphofructokinase (319 aa).

Residue Gly11 coordinates ATP. Position 21 to 25 (21 to 25 (RAVVR)) interacts with ADP. ATP-binding positions include 72 to 73 (RC) and 102 to 105 (GNGS). Asn103 serves as a coordination point for Mg(2+). 125–127 (TID) serves as a coordination point for substrate. The active-site Proton acceptor is Asp127. Residue Arg154 coordinates ADP. Substrate is bound by residues Arg162 and 169–171 (MGR). Residues 185–187 (GAE), Arg211, and 213–215 (KMH) contribute to the ADP site. Substrate contacts are provided by residues Glu222, Arg243, and 249–252 (HIQR).

Belongs to the phosphofructokinase type A (PFKA) family. ATP-dependent PFK group I subfamily. Prokaryotic clade 'B1' sub-subfamily. As to quaternary structure, homotetramer. Requires Mg(2+) as cofactor.

It localises to the cytoplasm. It carries out the reaction beta-D-fructose 6-phosphate + ATP = beta-D-fructose 1,6-bisphosphate + ADP + H(+). Its pathway is carbohydrate degradation; glycolysis; D-glyceraldehyde 3-phosphate and glycerone phosphate from D-glucose: step 3/4. Its activity is regulated as follows. Allosterically activated by ADP and other diphosphonucleosides, and allosterically inhibited by phosphoenolpyruvate. Its function is as follows. Catalyzes the phosphorylation of D-fructose 6-phosphate to fructose 1,6-bisphosphate by ATP, the first committing step of glycolysis. The chain is ATP-dependent 6-phosphofructokinase from Clostridium acetobutylicum (strain ATCC 824 / DSM 792 / JCM 1419 / IAM 19013 / LMG 5710 / NBRC 13948 / NRRL B-527 / VKM B-1787 / 2291 / W).